We begin with the raw amino-acid sequence, 141 residues long: Large ribosomal subunit protein uL11 (141 aa).

The protein belongs to the universal ribosomal protein uL11 family. As to quaternary structure, part of the ribosomal stalk of the 50S ribosomal subunit. Interacts with L10 and the large rRNA to form the base of the stalk. L10 forms an elongated spine to which L12 dimers bind in a sequential fashion forming a multimeric L10(L12)X complex. Post-translationally, one or more lysine residues are methylated.

Functionally, forms part of the ribosomal stalk which helps the ribosome interact with GTP-bound translation factors. In Helicobacter pylori (strain P12), this protein is Large ribosomal subunit protein uL11.